The primary structure comprises 444 residues: uncharacterized protein (444 aa).

Helical transmembrane passes span 9-29 (LIVSLLLGAILVPINSTMIAV), 42-62 (IASITWVVTVYLIVMAVTQPI), 82-102 (LFLIASLGCALSPSLLLLIVF), 104-126 (ALQAVGGALLTPNSIAIIRHVVS), 136-156 (FFGLGAGLGAALGPFIGSILI), 164-184 (IFWVNIPFLAIALFTALTMFP), 193-213 (APLDIIGSLLLAGSIVSIILL), 217-237 (EAPWGYTVYSVLILLFVPLFF), 263-283 (LSVLLSNLMMYAVLLIMPLFM), 295-315 (GMALSVFSIFMSASNWVGAQL), 324-344 (IIFLSFAMMAGANLLFLLLSS), 347-367 (SVLFLMLSLILGGLASGVGLT), 387-407 (GIFSTFRYFGSIISSALIGLI), and 411-431 (HTLFMILFAVSIIGVFVSLGI).

This sequence belongs to the major facilitator superfamily. TCR/Tet family.

It localises to the cell membrane. This is an uncharacterized protein from Bacillus subtilis (strain 168).